The following is a 543-amino-acid chain: MDRGSHRNSSPARTPPQASPARTSPARAPPQASPARTPPQASPARTPPQASPARAPPPQASPARASPARAPPSRSSSGRSSSARSASTTSSPTRVYLVRATPVGAVPIRASPARSAPATRATRESPGLSFPKFSWQETQRQLPLIGCVILLISLVISLILLFYFWRGHTGIKYKEPLESCPIHAVRCDGVVDCKMKSDELGCVRFDWDKSLLKVYSGSSGEWLPVCSSSWNDTDSKRTCQQLGFDSAYRTTEVAHRDITSSFLLSEYNTTIQESLYRSQCSSRRYVSLQCSHCGLRAMTGRIVGGALTSESKWPWQVSLHFGTTHICGGTLIDAQWVLTAAHCFFVTREKLLEGWKVYAGTSNLHQLPEAASISQIIINGNYTDEQDDYDIALIRLSKPLTLSAHIHPACLPMHGQTFGLNETCWITGFGKTKETDEKTSPFLREVQVNLIDFKKCNDYLVYDSYLTPRMMCAGDLRGGRDSCQGDSGGPLVCEQNNRWYLAGVTSWGTGCGQKNKPGVYTKVTEVLPWIYRKMESEVRFRKS.

Disordered regions lie at residues 1 to 96 and 109 to 129; these read MDRG…TRVY and RASP…PGLS. Residues 1-143 are Cytoplasmic-facing; it reads MDRGSHRNSS…SWQETQRQLP (143 aa). 2 tandem repeats follow at residues 14–17 and 18–22. The interval 14 to 49 is 4 X 4 AA repeats of T-P-P-Q; that stretch reads TPPQASPARTSPARAPPQASPARTPPQASPARTPPQ. The tract at residues 18 to 69 is 8 X 5 AA repeats of A-S-P-A-R; that stretch reads ASPARTSPARAPPQASPARTPPQASPARTPPQASPARAPPPQASPARASPAR. The stretch at 23-27 is one 2-2; approximate repeat; sequence TSPAR. Pro residues predominate over residues 27-60; it reads RAPPQASPARTPPQASPARTPPQASPARAPPPQA. The 1-2; approximate repeat unit spans residues 28–31; that stretch reads APPQ. 5 repeat units span residues 32-36, 37-40, 41-45, 46-49, and 50-54. Residues 55 to 59 form a 2-6; approximate repeat; sequence APPPQ. Repeat copies occupy residues 60–64 and 65–69. Low complexity-rich tracts occupy residues 61–94 and 109–120; these read SPAR…SPTR and RASPARSAPATR. The helical; Signal-anchor for type II membrane protein transmembrane segment at 144–164 threads the bilayer; the sequence is LIGCVILLISLVISLILLFYF. At 165–543 the chain is on the extracellular side; the sequence is WRGHTGIKYK…MESEVRFRKS (379 aa). Residues 180-202 enclose the LDL-receptor class A domain; it reads CPIHAVRCDGVVDCKMKSDELGC. Positions 199–301 constitute an SRCR domain; the sequence is ELGCVRFDWD…HCGLRAMTGR (103 aa). 3 cysteine pairs are disulfide-bonded: C226–C290, C239–C293, and C327–C343. Residues N231 and N268 are each glycosylated (N-linked (GlcNAc...) asparagine). The Peptidase S1 domain maps to 302–535; sequence IVGGALTSES…VLPWIYRKME (234 aa). H342 acts as the Charge relay system in catalysis. N381 is a glycosylation site (N-linked (GlcNAc...) asparagine). Catalysis depends on D390, which acts as the Charge relay system. A glycan (N-linked (GlcNAc...) asparagine) is linked at N421. 3 disulfide bridges follow: C424-C493, C456-C472, and C483-C511. S487 acts as the Charge relay system in catalysis.

It belongs to the peptidase S1 family. Interacts with SPINT1/HAI-1; the interaction promotes the phosphorylation and cell membrane localization of TMPRSS13. Interacts with SPINT2/HAI-2; the interaction promotes the phosphorylation and cell membrane localization of TMPRSS13. The inactive zymogen is post-translationally modified and then trafficked to the cell surface, whereby it undergoes autocatalytic cleavage resulting in an activated form that is released extracellularly. Post-translationally, phosphorylation is required for localization at the cell surface. Phosphorylation increases following inhibition of protease activity by SPINT2/HAI-2. As to expression, expressed in the suprabasal squamous epithelium of the epidermis, hair follicles, oral epithelium, cornea, upper digestive tract, transitional epithelium of the bladder, prostate, heart, intestine, kidney and thymus.

It localises to the cell membrane. Its subcellular location is the secreted. The protein localises to the cytoplasm. Its activity is regulated as follows. Cleavage of HGF is inhibited by SPINT1/HAI-1 via the BPTI/Kunitz inhibitor 1 domain. In terms of biological role, serine protease. Cleaves the proform of PRSS8/prostasin to form the active protein. Cleaves the proform of HGF to form the active protein which promotes MAPK signaling. Promotes the formation of the stratum corneum and subsequently the epidermal barrier in embryos. This chain is Transmembrane protease serine 13 (Tmprss13), found in Mus musculus (Mouse).